The sequence spans 256 residues: Chlorophyll a-b binding protein CP24 10B, chloroplastic (256 aa).

A chloroplast-targeting transit peptide spans M1–A45. 2 helical membrane passes run W106–F126 and A134–V154.

This sequence belongs to the ELIP/psbS family.

It is found in the plastid. Its subcellular location is the chloroplast thylakoid membrane. In Solanum lycopersicum (Tomato), this protein is Chlorophyll a-b binding protein CP24 10B, chloroplastic (CAP10B).